We begin with the raw amino-acid sequence, 639 residues long: Extracellular metalloproteinase mep (639 aa).

A signal peptide spans 1-16 (MHMLSFIGALALPVFV). Residues 17-245 (CAQSCEPASL…IHGVVDYISE (229 aa)) constitute a propeptide that is removed on maturation. Residues asparagine 287, asparagine 320, asparagine 336, and asparagine 368 are each glycosylated (N-linked (GlcNAc...) asparagine). Residue histidine 429 participates in Zn(2+) binding. Glutamate 430 is an active-site residue. Histidine 433 provides a ligand contact to Zn(2+). An N-linked (GlcNAc...) asparagine glycan is attached at asparagine 509.

This sequence belongs to the peptidase M36 family. Requires Zn(2+) as cofactor.

It is found in the secreted. In terms of biological role, secreted metalloproteinase that allows assimilation of proteinaceous substrates. The polypeptide is Extracellular metalloproteinase mep (mep) (Aspergillus flavus (strain ATCC 200026 / FGSC A1120 / IAM 13836 / NRRL 3357 / JCM 12722 / SRRC 167)).